The following is a 98-amino-acid chain: NADH-ubiquinone oxidoreductase chain 4L (98 aa).

A run of 3 helical transmembrane segments spans residues 1–21 (MSLVYVNVMIAFLISLLGLLM), 29–49 (SLLCLEGMMLSLFILGTIMIL), and 61–81 (IILLVFAACEAAIGLSLLVMV).

It belongs to the complex I subunit 4L family. Core subunit of respiratory chain NADH dehydrogenase (Complex I) which is composed of 45 different subunits.

The protein resides in the mitochondrion inner membrane. The catalysed reaction is a ubiquinone + NADH + 5 H(+)(in) = a ubiquinol + NAD(+) + 4 H(+)(out). In terms of biological role, core subunit of the mitochondrial membrane respiratory chain NADH dehydrogenase (Complex I) which catalyzes electron transfer from NADH through the respiratory chain, using ubiquinone as an electron acceptor. Part of the enzyme membrane arm which is embedded in the lipid bilayer and involved in proton translocation. This chain is NADH-ubiquinone oxidoreductase chain 4L (MT-ND4L), found in Urotrichus talpoides (Japanese shrew mole).